A 276-amino-acid polypeptide reads, in one-letter code: Neuroendocrine protein 7B2 (276 aa).

A disulfide bridge connects residues Cys-155 and Cys-168.

Belongs to the 7B2 family. As to quaternary structure, interacts with amon/PC2 early in the secretory pathway. Dissociation occurs at later stages.

It localises to the secreted. In terms of biological role, acts as a molecular chaperone for neuroendocrine convertase amon/PC2, preventing its premature activation in the regulated secretory pathway. Binds to inactive amon in the endoplasmic reticulum and facilitates its transport from there to later compartments of the secretory pathway where it is proteolytically matured and activated. Also required for cleavage of amon. This is Neuroendocrine protein 7B2 from Drosophila melanogaster (Fruit fly).